The chain runs to 281 residues: DegV domain-containing protein YqaC (281 aa).

In terms of domain architecture, DegV spans 3 to 279 (LAVITDSSAD…LNTVAYGISP (277 aa)). Positions 60 and 93 each coordinate hexadecanoate.

May bind long-chain fatty acids, such as palmitate, and may play a role in lipid transport or fatty acid metabolism. This is DegV domain-containing protein YqaC (yqaC) from Lactococcus lactis subsp. lactis (strain IL1403) (Streptococcus lactis).